The primary structure comprises 513 residues: ATP synthase subunit alpha (513 aa).

ATP is bound at residue 169-176 (GDRQTGKT).

Belongs to the ATPase alpha/beta chains family. F-type ATPases have 2 components, CF(1) - the catalytic core - and CF(0) - the membrane proton channel. CF(1) has five subunits: alpha(3), beta(3), gamma(1), delta(1), epsilon(1). CF(0) has three main subunits: a(1), b(2) and c(9-12). The alpha and beta chains form an alternating ring which encloses part of the gamma chain. CF(1) is attached to CF(0) by a central stalk formed by the gamma and epsilon chains, while a peripheral stalk is formed by the delta and b chains.

The protein localises to the cell inner membrane. The enzyme catalyses ATP + H2O + 4 H(+)(in) = ADP + phosphate + 5 H(+)(out). Its function is as follows. Produces ATP from ADP in the presence of a proton gradient across the membrane. The alpha chain is a regulatory subunit. This Vibrio vulnificus (strain CMCP6) protein is ATP synthase subunit alpha.